The sequence spans 219 residues: Small ribosomal subunit protein uS3 (219 aa).

Residues 38-106 form the KH type-2 domain; that stretch reads IREYITARLK…RVHINILEVK (69 aa).

It belongs to the universal ribosomal protein uS3 family. In terms of assembly, part of the 30S ribosomal subunit. Forms a tight complex with proteins S10 and S14.

Its function is as follows. Binds the lower part of the 30S subunit head. Binds mRNA in the 70S ribosome, positioning it for translation. The protein is Small ribosomal subunit protein uS3 of Bacillus cytotoxicus (strain DSM 22905 / CIP 110041 / 391-98 / NVH 391-98).